The primary structure comprises 217 residues: Uridylate kinase (217 aa).

5–9 (KLTGR) provides a ligand contact to ATP. Residue Gly37 participates in UMP binding. Residues Gly38 and Arg42 each contribute to the ATP site. Residues Asp59 and 107–113 (FQPGQST) contribute to the UMP site. Residues Asn134, Tyr139, and Asp142 each contribute to the ATP site.

The protein belongs to the UMP kinase family. Homohexamer.

It localises to the cytoplasm. The catalysed reaction is UMP + ATP = UDP + ADP. It functions in the pathway pyrimidine metabolism; CTP biosynthesis via de novo pathway; UDP from UMP (UMPK route): step 1/1. With respect to regulation, inhibited by UTP. Functionally, catalyzes the reversible phosphorylation of UMP to UDP. This chain is Uridylate kinase, found in Pyrobaculum calidifontis (strain DSM 21063 / JCM 11548 / VA1).